We begin with the raw amino-acid sequence, 387 residues long: 3-ketoacyl-CoA thiolase (387 aa).

The active-site Acyl-thioester intermediate is the Cys-91. Active-site proton acceptor residues include His-343 and Cys-373.

The protein belongs to the thiolase-like superfamily. Thiolase family. As to quaternary structure, heterotetramer of two alpha chains (FadB) and two beta chains (FadA).

The protein localises to the cytoplasm. The catalysed reaction is an acyl-CoA + acetyl-CoA = a 3-oxoacyl-CoA + CoA. The protein operates within lipid metabolism; fatty acid beta-oxidation. Functionally, catalyzes the final step of fatty acid oxidation in which acetyl-CoA is released and the CoA ester of a fatty acid two carbons shorter is formed. This Serratia proteamaculans (strain 568) protein is 3-ketoacyl-CoA thiolase.